We begin with the raw amino-acid sequence, 202 residues long: Transmembrane 4 L6 family member 1 (202 aa).

Over 1–9 (MCYVKCARY) the chain is Cytoplasmic. A helical membrane pass occupies residues 10-30 (IGYSLVWAAVFCIVANALLYF). Residues 31-49 (PNGETKYATEDHLSRFVWY) are Extracellular-facing. A helical transmembrane segment spans residues 50 to 70 (FAGIVGGGLLMLLPAFVFIGM). Residues 71–93 (DEEDCCGCCGYENYGKRCSMLSS) are Cytoplasmic-facing. Residues 94–114 (VLAALIGIVGSAYCVIVASLG) traverse the membrane as a helical segment. At 115–161 (LAEGPKCSDAHGVWNYTFASTEGQYLLNSSMWSKCYEPKHIVEWHVT) the chain is on the extracellular side. N-linked (GlcNAc...) asparagine glycans are attached at residues Asn129 and Asn142. The helical transmembrane segment at 162–182 (LFSILLAFAAVEFILCLIQVI) threads the bilayer. Over 183–202 (NGMLGGLCGYCCSRQQQYNC) the chain is Cytoplasmic.

It belongs to the L6 tetraspanin family. In terms of assembly, present in high molecular weight complexes in tumor cells. Interacts with SDCBP2. In terms of tissue distribution, highly expressed in skin and lung. Moderately expressed in lymph nodes and kidneys. Also present in thymic stroma and fibroblasts.

The protein resides in the membrane. The sequence is that of Transmembrane 4 L6 family member 1 (Tm4sf1) from Mus musculus (Mouse).